Reading from the N-terminus, the 409-residue chain is Elongation factor Tu, plastid (409 aa).

One can recognise a tr-type G domain in the interval Lys10–Ile214. Residues Gly19–Thr26 form a G1 region. Gly19–Thr26 serves as a coordination point for GTP. A Mg(2+)-binding site is contributed by Thr26. The interval Gly60–Asn64 is G2. The interval Asp81–Gly84 is G3. GTP-binding positions include Asp81–His85 and Asn136–Asp139. Residues Asn136 to Asp139 form a G4 region. Positions Ser174–Leu176 are G5.

It belongs to the TRAFAC class translation factor GTPase superfamily. Classic translation factor GTPase family. EF-Tu/EF-1A subfamily.

The protein localises to the plastid. The catalysed reaction is GTP + H2O = GDP + phosphate + H(+). Functionally, GTP hydrolase that promotes the GTP-dependent binding of aminoacyl-tRNA to the A-site of ribosomes during protein biosynthesis. In Euglena longa (Euglenophycean alga), this protein is Elongation factor Tu, plastid (tufA).